A 383-amino-acid polypeptide reads, in one-letter code: Acetylornithine deacetylase (383 aa).

Residue His-80 participates in Zn(2+) binding. Residue Asp-82 is part of the active site. Asp-112 serves as a coordination point for Zn(2+). Residue Glu-144 is part of the active site. Zn(2+) is bound by residues Glu-145, Glu-169, and His-355.

The protein belongs to the peptidase M20A family. ArgE subfamily. In terms of assembly, homodimer. Zn(2+) serves as cofactor. Co(2+) is required as a cofactor. It depends on glutathione as a cofactor.

Its subcellular location is the cytoplasm. It catalyses the reaction N(2)-acetyl-L-ornithine + H2O = L-ornithine + acetate. Its pathway is amino-acid biosynthesis; L-arginine biosynthesis; L-ornithine from N(2)-acetyl-L-ornithine (linear): step 1/1. In terms of biological role, catalyzes the hydrolysis of the amide bond of N(2)-acetylated L-amino acids. Cleaves the acetyl group from N-acetyl-L-ornithine to form L-ornithine, an intermediate in L-arginine biosynthesis pathway, and a branchpoint in the synthesis of polyamines. This chain is Acetylornithine deacetylase, found in Salmonella arizonae (strain ATCC BAA-731 / CDC346-86 / RSK2980).